Consider the following 316-residue polypeptide: tRNA dimethylallyltransferase (316 aa).

An ATP-binding site is contributed by 17-24 (GPTASGKT). 19–24 (TASGKT) contributes to the substrate binding site. Interaction with substrate tRNA regions lie at residues 42–45 (DSAL), 166–170 (QRLSR), and 247–252 (RCVGYR).

This sequence belongs to the IPP transferase family. As to quaternary structure, monomer. The cofactor is Mg(2+).

It catalyses the reaction adenosine(37) in tRNA + dimethylallyl diphosphate = N(6)-dimethylallyladenosine(37) in tRNA + diphosphate. Catalyzes the transfer of a dimethylallyl group onto the adenine at position 37 in tRNAs that read codons beginning with uridine, leading to the formation of N6-(dimethylallyl)adenosine (i(6)A). The polypeptide is tRNA dimethylallyltransferase (Salmonella arizonae (strain ATCC BAA-731 / CDC346-86 / RSK2980)).